A 435-amino-acid chain; its full sequence is Chromosomal replication initiator protein DnaA (435 aa).

Positions 1–70 are domain I, interacts with DnaA modulators; the sequence is MNIGEKILLL…KHLFEIQNSI (70 aa). A domain II region spans residues 70–98; it reads IKVDVSILLKNQVESKKAEQKSVQKQQHS. Residues 99 to 313 form a domain III, AAA+ region region; that stretch reads LLNPSHTFEN…GILSKLHAYS (215 aa). 4 residues coordinate ATP: Gly143, Gly145, Lys146, and Thr147. Residues 314-435 are domain IV, binds dsDNA; sequence QLMHVDIDLQ…ELTNKITSSS (122 aa).

Belongs to the DnaA family. Oligomerizes as a right-handed, spiral filament on DNA at oriC.

Its subcellular location is the cytoplasm. Its function is as follows. Plays an essential role in the initiation and regulation of chromosomal replication. ATP-DnaA binds to the origin of replication (oriC) to initiate formation of the DNA replication initiation complex once per cell cycle. Binds the DnaA box (a 9 base pair repeat at the origin) and separates the double-stranded (ds)DNA. Forms a right-handed helical filament on oriC DNA; dsDNA binds to the exterior of the filament while single-stranded (ss)DNA is stabiized in the filament's interior. The ATP-DnaA-oriC complex binds and stabilizes one strand of the AT-rich DNA unwinding element (DUE), permitting loading of DNA polymerase. After initiation quickly degrades to an ADP-DnaA complex that is not apt for DNA replication. Binds acidic phospholipids. The polypeptide is Chromosomal replication initiator protein DnaA (Sulfurimonas denitrificans (strain ATCC 33889 / DSM 1251) (Thiomicrospira denitrificans (strain ATCC 33889 / DSM 1251))).